The primary structure comprises 174 residues: Peptide deformylase (174 aa).

2 residues coordinate Fe cation: C98 and H140. Residue E141 is part of the active site. H144 contacts Fe cation.

This sequence belongs to the polypeptide deformylase family. Requires Fe(2+) as cofactor.

It catalyses the reaction N-terminal N-formyl-L-methionyl-[peptide] + H2O = N-terminal L-methionyl-[peptide] + formate. Functionally, removes the formyl group from the N-terminal Met of newly synthesized proteins. Requires at least a dipeptide for an efficient rate of reaction. N-terminal L-methionine is a prerequisite for activity but the enzyme has broad specificity at other positions. The chain is Peptide deformylase from Bradyrhizobium diazoefficiens (strain JCM 10833 / BCRC 13528 / IAM 13628 / NBRC 14792 / USDA 110).